Consider the following 88-residue polypeptide: Small ribosomal subunit protein uS17 (88 aa).

This sequence belongs to the universal ribosomal protein uS17 family. In terms of assembly, part of the 30S ribosomal subunit.

Its function is as follows. One of the primary rRNA binding proteins, it binds specifically to the 5'-end of 16S ribosomal RNA. This is Small ribosomal subunit protein uS17 from Prochlorococcus marinus (strain MIT 9303).